The sequence spans 732 residues: Phosphoribosylformylglycinamidine synthase subunit PurL (732 aa).

The active site involves histidine 32. An ATP-binding site is contributed by tyrosine 35. Residue glutamate 81 participates in Mg(2+) binding. Residues 82 to 85 and arginine 104 each bind substrate; that span reads SHNH. Residue histidine 83 is the Proton acceptor of the active site. Aspartate 105 contributes to the Mg(2+) binding site. A substrate-binding site is contributed by glutamine 230. Aspartate 258 is a binding site for Mg(2+). 302-304 provides a ligand contact to substrate; sequence ESQ. The ATP site is built by aspartate 485 and glycine 522. Asparagine 523 contacts Mg(2+). Serine 525 lines the substrate pocket.

Belongs to the FGAMS family. As to quaternary structure, monomer. Part of the FGAM synthase complex composed of 1 PurL, 1 PurQ and 2 PurS subunits.

It localises to the cytoplasm. It catalyses the reaction N(2)-formyl-N(1)-(5-phospho-beta-D-ribosyl)glycinamide + L-glutamine + ATP + H2O = 2-formamido-N(1)-(5-O-phospho-beta-D-ribosyl)acetamidine + L-glutamate + ADP + phosphate + H(+). It functions in the pathway purine metabolism; IMP biosynthesis via de novo pathway; 5-amino-1-(5-phospho-D-ribosyl)imidazole from N(2)-formyl-N(1)-(5-phospho-D-ribosyl)glycinamide: step 1/2. Functionally, part of the phosphoribosylformylglycinamidine synthase complex involved in the purines biosynthetic pathway. Catalyzes the ATP-dependent conversion of formylglycinamide ribonucleotide (FGAR) and glutamine to yield formylglycinamidine ribonucleotide (FGAM) and glutamate. The FGAM synthase complex is composed of three subunits. PurQ produces an ammonia molecule by converting glutamine to glutamate. PurL transfers the ammonia molecule to FGAR to form FGAM in an ATP-dependent manner. PurS interacts with PurQ and PurL and is thought to assist in the transfer of the ammonia molecule from PurQ to PurL. The protein is Phosphoribosylformylglycinamidine synthase subunit PurL of Methanococcus aeolicus (strain ATCC BAA-1280 / DSM 17508 / OCM 812 / Nankai-3).